The following is a 288-amino-acid chain: Probable chromosome 1-partitioning protein ParB (288 aa).

The protein belongs to the ParB family.

Its function is as follows. Involved in chromosome partition. Localize to both poles of the predivisional cell following completion of DNA replication. Binds to the DNA origin of replication. This chain is Probable chromosome 1-partitioning protein ParB (parB1), found in Deinococcus radiodurans (strain ATCC 13939 / DSM 20539 / JCM 16871 / CCUG 27074 / LMG 4051 / NBRC 15346 / NCIMB 9279 / VKM B-1422 / R1).